A 524-amino-acid polypeptide reads, in one-letter code: Bifunctional purine biosynthesis protein PurH (524 aa).

The 144-residue stretch at 1-144 (MTRRALVSVS…KNSAHVGVVV (144 aa)) folds into the MGS-like domain.

This sequence belongs to the PurH family.

It carries out the reaction (6R)-10-formyltetrahydrofolate + 5-amino-1-(5-phospho-beta-D-ribosyl)imidazole-4-carboxamide = 5-formamido-1-(5-phospho-D-ribosyl)imidazole-4-carboxamide + (6S)-5,6,7,8-tetrahydrofolate. The catalysed reaction is IMP + H2O = 5-formamido-1-(5-phospho-D-ribosyl)imidazole-4-carboxamide. Its pathway is purine metabolism; IMP biosynthesis via de novo pathway; 5-formamido-1-(5-phospho-D-ribosyl)imidazole-4-carboxamide from 5-amino-1-(5-phospho-D-ribosyl)imidazole-4-carboxamide (10-formyl THF route): step 1/1. It functions in the pathway purine metabolism; IMP biosynthesis via de novo pathway; IMP from 5-formamido-1-(5-phospho-D-ribosyl)imidazole-4-carboxamide: step 1/1. The sequence is that of Bifunctional purine biosynthesis protein PurH from Anaeromyxobacter dehalogenans (strain 2CP-1 / ATCC BAA-258).